The following is a 379-amino-acid chain: Cytochrome b (379 aa).

4 helical membrane passes run 33 to 53 (FGSL…FLAM), 77 to 98 (WLIR…FIHV), 113 to 133 (WNIG…GYVL), and 178 to 198 (FFAF…VHLL). The heme b site is built by histidine 83 and histidine 97. 2 residues coordinate heme b: histidine 182 and histidine 196. Residue histidine 201 participates in a ubiquinone binding. Helical transmembrane passes span 226 to 246 (TKDL…ALFF), 288 to 308 (LGGV…PLLN), 320 to 340 (VTQI…WIGG), and 347 to 367 (FTTI…ILIP).

It belongs to the cytochrome b family. As to quaternary structure, the cytochrome bc1 complex contains 11 subunits: 3 respiratory subunits (MT-CYB, CYC1 and UQCRFS1), 2 core proteins (UQCRC1 and UQCRC2) and 6 low-molecular weight proteins (UQCRH/QCR6, UQCRB/QCR7, UQCRQ/QCR8, UQCR10/QCR9, UQCR11/QCR10 and a cleavage product of UQCRFS1). This cytochrome bc1 complex then forms a dimer. The cofactor is heme b.

Its subcellular location is the mitochondrion inner membrane. Functionally, component of the ubiquinol-cytochrome c reductase complex (complex III or cytochrome b-c1 complex) that is part of the mitochondrial respiratory chain. The b-c1 complex mediates electron transfer from ubiquinol to cytochrome c. Contributes to the generation of a proton gradient across the mitochondrial membrane that is then used for ATP synthesis. The chain is Cytochrome b (MT-CYB) from Akodon reigi (Reig's grass mouse).